The primary structure comprises 303 residues: Acetylglutamate kinase (303 aa).

Substrate contacts are provided by residues 73 to 74 (GG), Arg95, and Asn194.

Belongs to the acetylglutamate kinase family. ArgB subfamily.

It localises to the cytoplasm. The enzyme catalyses N-acetyl-L-glutamate + ATP = N-acetyl-L-glutamyl 5-phosphate + ADP. It functions in the pathway amino-acid biosynthesis; L-arginine biosynthesis; N(2)-acetyl-L-ornithine from L-glutamate: step 2/4. Functionally, catalyzes the ATP-dependent phosphorylation of N-acetyl-L-glutamate. The protein is Acetylglutamate kinase of Saccharopolyspora erythraea (strain ATCC 11635 / DSM 40517 / JCM 4748 / NBRC 13426 / NCIMB 8594 / NRRL 2338).